The following is a 256-amino-acid chain: Type III pantothenate kinase (256 aa).

6 to 13 contacts ATP; the sequence is DVGNSHIY. Residues Tyr99 and 106 to 109 each bind substrate; that span reads GADR. The active-site Proton acceptor is Asp108. Asp129 lines the K(+) pocket. Residue Thr132 coordinates ATP. Thr184 lines the substrate pocket.

The protein belongs to the type III pantothenate kinase family. In terms of assembly, homodimer. It depends on NH4(+) as a cofactor. The cofactor is K(+).

The protein localises to the cytoplasm. The catalysed reaction is (R)-pantothenate + ATP = (R)-4'-phosphopantothenate + ADP + H(+). It functions in the pathway cofactor biosynthesis; coenzyme A biosynthesis; CoA from (R)-pantothenate: step 1/5. Catalyzes the phosphorylation of pantothenate (Pan), the first step in CoA biosynthesis. The polypeptide is Type III pantothenate kinase (Legionella pneumophila (strain Paris)).